We begin with the raw amino-acid sequence, 332 residues long: MAAPQVKSSSELTMAVLGCGTMGISILSGILSSLSSIAQDPSPPPTNPPALPRHFIATVRSPSSVAKVESALSPLVKPSVSTLRVLQSTSNVSAAAEADIILLGCKPYMVSGLLSASGMKDALTVKHTEGHARSQKIIISICAGVTVPDLERVLREDVGLSADNLPIVVRAMPNTASKIRESMTVINTVDPPLPDTVTELLTWIFERIGEVVYLPPHLMDACTSLCASGTAFFALMMEAAADGGVAMGLPRAEANRMAAQTMRGAAGLVLEGEHPAILREKVSTPGGCTIGGLLVLEEGGVRAAVARAVREATVVASLLGGGGAKNVNGTRH.

The protein belongs to the pyrroline-5-carboxylate reductase family.

The catalysed reaction is L-proline + NADP(+) = (S)-1-pyrroline-5-carboxylate + NADPH + 2 H(+). It catalyses the reaction L-proline + NAD(+) = (S)-1-pyrroline-5-carboxylate + NADH + 2 H(+). The protein operates within amino-acid biosynthesis; L-proline biosynthesis; L-proline from L-glutamate 5-semialdehyde: step 1/1. The chain is Pyrroline-5-carboxylate reductase (pro-1) from Neurospora crassa (strain ATCC 24698 / 74-OR23-1A / CBS 708.71 / DSM 1257 / FGSC 987).